The sequence spans 143 residues: Putative pre-16S rRNA nuclease (143 aa).

The protein belongs to the YqgF nuclease family.

The protein localises to the cytoplasm. Its function is as follows. Could be a nuclease involved in processing of the 5'-end of pre-16S rRNA. This Crocosphaera subtropica (strain ATCC 51142 / BH68) (Cyanothece sp. (strain ATCC 51142)) protein is Putative pre-16S rRNA nuclease.